The following is a 222-amino-acid chain: Putative auxin response factor 23 (222 aa).

The segment at residues 126 to 222 (FTKVLTASDT…ETGELRVGIR (97 aa)) is a DNA-binding region (TF-B3).

Belongs to the ARF family. In terms of assembly, homo and heterodimers.

It is found in the nucleus. Its function is as follows. Auxin response factors (ARFs) are transcriptional factors that binds specifically to the DNA sequence 5'-TGTCTC-3' found in the auxin-responsive promoter elements (AuxREs). Could act as transcriptional activator or repressor. Formation of heterodimers with Aux/IAA proteins may alter their ability to modulate early auxin response genes expression. In Arabidopsis thaliana (Mouse-ear cress), this protein is Putative auxin response factor 23 (ARF23).